We begin with the raw amino-acid sequence, 686 residues long: Methionine--tRNA ligase (686 aa).

A 'HIGH' region motif is present at residues 15–25; the sequence is PYANGSIHLGH. The Zn(2+) site is built by C146, C149, C159, and C162. Residues 332-336 carry the 'KMSKS' region motif; it reads KMSKS. K335 lines the ATP pocket. Residues 550 to 571 form a disordered region; it reads AAAEAAAKEKAEAEKEQASQTE. A tRNA-binding domain is found at 585 to 686; sequence AFSAVDMRIA…EGAQPGMRVM (102 aa).

The protein belongs to the class-I aminoacyl-tRNA synthetase family. MetG type 1 subfamily. As to quaternary structure, homodimer. Zn(2+) is required as a cofactor.

The protein resides in the cytoplasm. It catalyses the reaction tRNA(Met) + L-methionine + ATP = L-methionyl-tRNA(Met) + AMP + diphosphate. Its function is as follows. Is required not only for elongation of protein synthesis but also for the initiation of all mRNA translation through initiator tRNA(fMet) aminoacylation. This Vibrio atlanticus (strain LGP32) (Vibrio splendidus (strain Mel32)) protein is Methionine--tRNA ligase.